A 415-amino-acid polypeptide reads, in one-letter code: MVRPRRAPHRSGAGGPLGGRGRPLRPFTARAARSRSWPASPRGPQPPRIRARSAPPMQGARVFGALGPIGPSSPGLALGGLAVGEHRLSNKLLAWSGVLEWQEKRRPYSDSTAKLKRALPCQAYVNQGENLETDQWPQKLIMQLIPQQLLTTLGPLFRNSQLAQFHFTNRDCDSLKGLCRVMGNGFAGCMLFPHISPCEVRVLMLLYSSKKKIFMGLIPYDQSGFVNAIRQVITTRKQAVGPGGVAGPVQIVNNKFLAWSGVMEWQEPRPEPHSRSKRWLPSHIYVNQGEILRTEQWPRKLYMQLIPQQLLTTLVPLFRNSRLVQFHFTKDLETLKSLCRIMDNGFAGCVHFSYKASCEVRVLMLLYSSEKKIFIGLIPHDQSNFVNGIRRVIANQQQVLQRNLEQEQQQRGMGG.

The tract at residues 1–54 is disordered; the sequence is MVRPRRAPHRSGAGGPLGGRGRPLRPFTARAARSRSWPASPRGPQPPRIRARSA. Residues 12 to 21 show a composition bias toward gly residues; that stretch reads GAGGPLGGRG. Residues 24 to 40 are compositionally biased toward low complexity; the sequence is LRPFTARAARSRSWPAS. S53 carries the phosphoserine modification. Positions 184-415 are interaction with FLOT1; the sequence is NGFAGCMLFP…QEQQQRGMGG (232 aa).

This sequence belongs to the Mediator complex subunit 25 family. PTOV1 subfamily. As to quaternary structure, may interact with CREBBP. Interacts with FLOT1. Post-translationally, ubiquitinated by the CRL2(KLHDC2) complex, which recognizes the diglycine (Gly-Gly) at the C-terminus, leading to its degradation. Ubiquitinated by the CRL2(APPBP2) complex, which recognizes the Arg-Xaa-Xaa-Gly sequence at the C-terminus, leading to its degradation.

The protein resides in the cytoplasm. It is found in the nucleus. It localises to the cell membrane. The protein localises to the perinuclear region. Functionally, may activate transcription. Required for nuclear translocation of FLOT1. Promotes cell proliferation. This chain is Prostate tumor-overexpressed gene 1 protein homolog (PTOV1), found in Bos taurus (Bovine).